The following is a 310-amino-acid chain: UPF0761 membrane protein VSAL_I2938 (310 aa).

6 helical membrane-spanning segments follow: residues 34 to 54 (YMAY…LSVL), 97 to 117 (MTAV…SAID), 136 to 156 (FSLY…SLAA), 178 to 198 (LLGW…YLLV), 207 to 227 (HALV…VGFA), and 242 to 262 (ALAA…IVLI).

Belongs to the UPF0761 family.

Its subcellular location is the cell inner membrane. This chain is UPF0761 membrane protein VSAL_I2938, found in Aliivibrio salmonicida (strain LFI1238) (Vibrio salmonicida (strain LFI1238)).